Consider the following 306-residue polypeptide: MNKNDILRGLESILPKDIIKVDEPLKRYTYTETGGEADFYLSPTKNEEVQAIVKFAHENSIPVTYLGNGSNIIIREGGIRGIVLSLLSLNHIETSDDAIIAGSGAAIIDVSNVARDHVLTGLEFACGIPGSIGGAVFMNAGAYGGEVKDCIDYALCVNEKGDLLKLTTAELELDYRNSVVQQKHLVVLEAAFTLEPGKLDEIQAKMDDLTERRESKQPLEFPSCGSVFQRPPGHFAGKLIQDSNLQGYRIGGVEVSTKHAGFMVNVDNGTATDYEALIHHVQKIVKEKFDVELNTEVRIIGDHPTD.

An FAD-binding PCMH-type domain is found at 33–197 (TGGEADFYLS…LEAAFTLEPG (165 aa)). Residue arginine 176 is part of the active site. Serine 226 (proton donor) is an active-site residue. Glutamate 296 is a catalytic residue.

The protein belongs to the MurB family. It depends on FAD as a cofactor.

Its subcellular location is the cytoplasm. It carries out the reaction UDP-N-acetyl-alpha-D-muramate + NADP(+) = UDP-N-acetyl-3-O-(1-carboxyvinyl)-alpha-D-glucosamine + NADPH + H(+). It functions in the pathway cell wall biogenesis; peptidoglycan biosynthesis. Its function is as follows. Cell wall formation. This chain is UDP-N-acetylenolpyruvoylglucosamine reductase, found in Staphylococcus epidermidis (strain ATCC 35984 / DSM 28319 / BCRC 17069 / CCUG 31568 / BM 3577 / RP62A).